The primary structure comprises 355 residues: Peptide chain release factor 1 (355 aa).

Gln-234 is modified (N5-methylglutamine).

The protein belongs to the prokaryotic/mitochondrial release factor family. Post-translationally, methylated by PrmC. Methylation increases the termination efficiency of RF1.

Its subcellular location is the cytoplasm. Peptide chain release factor 1 directs the termination of translation in response to the peptide chain termination codons UAG and UAA. This is Peptide chain release factor 1 from Metamycoplasma arthritidis (strain 158L3-1) (Mycoplasma arthritidis).